The chain runs to 518 residues: Triacylglycerol lipase OBL1 (518 aa).

A helical membrane pass occupies residues 93–113 (GFVVDFFLNLFSANGGFFGLL). The short motif at 337–341 (GHSLG) is the GXSXG element. Catalysis depends on S339, which acts as the Nucleophile. Catalysis depends on charge relay system residues D403 and H496.

Belongs to the AB hydrolase superfamily. Lipase family. In terms of tissue distribution, expressed in pollen grains, pollen tubes, developing embryos, developing seeds and germinating seeds.

The protein resides in the lipid droplet. The protein localises to the membrane. It catalyses the reaction 1,2-di-(9Z-octadecenoyl)-glycerol + (9Z)-octadecenoate + H(+) = 1,2,3-tri-(9Z-octadecenoyl)-glycerol + H2O. The enzyme catalyses 1-(9Z-octadecenoyl)-glycerol + H2O = glycerol + (9Z)-octadecenoate + H(+). Acid lipase that can hydrolyze a range of triacylglycerols without a clear preference for acyl-chains. Can also cleave 1,2-diacylglycerol, 1,3-diacylglycerol and 1-monoacylglycerol, but not phosphatidylcholine, phosphatidylethanolamine, or sterol esters. Required for pollen tube growth. Triacylglycerol hydrolysis by OBL1 may provide acyl groups for the synthesis of membrane lipids in growing pollen tubes. The sequence is that of Triacylglycerol lipase OBL1 from Arabidopsis thaliana (Mouse-ear cress).